A 214-amino-acid chain; its full sequence is MNSKISEIRKNYSLSSLDIGDIGDDPISFFQKWFEEAVLSEVLEVNAMTLATATKDGKPNARIVLLKEILEDSFVFYTNYESKKGRELEENPRACLVFFWSELERQVRIEGGVKKVSREESNVYFHSRPRGSQIGAVVSPQSYEIPNRKFLEERFEEFSKLYEGKEVDLPNHWGGYAVHPNRIEFWQGRSSRLHDRIVFEKDTDSSWKKFRVAP.

Substrate-binding positions include 9–12 (RKNY) and lysine 67. Residues 62–67 (RIVLLK), 77–78 (YT), lysine 83, lysine 84, and glutamine 106 contribute to the FMN site. Residues tyrosine 124, arginine 128, and serine 132 each contribute to the substrate site. FMN-binding positions include 141–142 (QS) and tryptophan 186. Residue 192–194 (RLH) participates in substrate binding. Arginine 196 lines the FMN pocket.

The protein belongs to the pyridoxamine 5'-phosphate oxidase family. As to quaternary structure, homodimer. Requires FMN as cofactor.

The enzyme catalyses pyridoxamine 5'-phosphate + O2 + H2O = pyridoxal 5'-phosphate + H2O2 + NH4(+). The catalysed reaction is pyridoxine 5'-phosphate + O2 = pyridoxal 5'-phosphate + H2O2. The protein operates within cofactor metabolism; pyridoxal 5'-phosphate salvage; pyridoxal 5'-phosphate from pyridoxamine 5'-phosphate: step 1/1. It participates in cofactor metabolism; pyridoxal 5'-phosphate salvage; pyridoxal 5'-phosphate from pyridoxine 5'-phosphate: step 1/1. Its function is as follows. Catalyzes the oxidation of either pyridoxine 5'-phosphate (PNP) or pyridoxamine 5'-phosphate (PMP) into pyridoxal 5'-phosphate (PLP). This Leptospira borgpetersenii serovar Hardjo-bovis (strain JB197) protein is Pyridoxine/pyridoxamine 5'-phosphate oxidase.